The chain runs to 135 residues: Ribosome-binding factor A (135 aa).

It belongs to the RbfA family. Monomer. Binds 30S ribosomal subunits, but not 50S ribosomal subunits or 70S ribosomes.

The protein localises to the cytoplasm. In terms of biological role, one of several proteins that assist in the late maturation steps of the functional core of the 30S ribosomal subunit. Associates with free 30S ribosomal subunits (but not with 30S subunits that are part of 70S ribosomes or polysomes). Required for efficient processing of 16S rRNA. May interact with the 5'-terminal helix region of 16S rRNA. The chain is Ribosome-binding factor A from Novosphingobium aromaticivorans (strain ATCC 700278 / DSM 12444 / CCUG 56034 / CIP 105152 / NBRC 16084 / F199).